Consider the following 65-residue polypeptide: Hainantoxin-X.2 (65 aa).

The signal sequence occupies residues Met1–Ala20. The propeptide occupies Glu21 to Arg37. Intrachain disulfides connect Cys39–Cys56, Cys46–Cys59, and Cys55–Cys64.

The protein belongs to the neurotoxin 36 family. 02 subfamily. In terms of tissue distribution, expressed by the venom gland.

It localises to the secreted. Reversibly blocks N-type calcium channels (Cav2.2/CACNA1B) in rat dorsal root ganglion cells. Elicits no toxic symptoms in either vertebrates or invertebrates during a period of 48 hours post-injection, when it was assayed in vivo by direct injection into mice and cockroaches. The protein is Hainantoxin-X.2 of Cyriopagopus hainanus (Chinese bird spider).